Consider the following 623-residue polypeptide: Laccase-1 (623 aa).

The first 22 residues, 1 to 22 (MKTFTSALALVVGMLAPGAVVA), serve as a signal peptide directing secretion. A propeptide spanning residues 23-50 (APPSTPAQRDLVELREARQEGGKDLRPR) is cleaved from the precursor. Residues cysteine 54 and cysteine 62 are joined by a disulfide bond. N-linked (GlcNAc...) asparagine glycans are attached at residues asparagine 89 and asparagine 138. The Cu cation site is built by histidine 143, histidine 145, histidine 188, and histidine 190. 2 disulfide bridges follow: cysteine 164–cysteine 590 and cysteine 348–cysteine 382. N-linked (GlcNAc...) asparagine glycosylation is found at asparagine 251, asparagine 266, asparagine 294, and asparagine 339. N-linked (GlcNAc...) asparagine glycans are attached at residues asparagine 426 and asparagine 446. Cu cation-binding residues include histidine 481, histidine 484, histidine 486, histidine 552, cysteine 553, histidine 554, and histidine 558. Positions 610-623 (KRRRWVEESEWLVR) are excised as a propeptide.

Belongs to the multicopper oxidase family. As to quaternary structure, monomer. Cu cation is required as a cofactor. As to expression, secreted protein; extracellular space.

The catalysed reaction is 4 hydroquinone + O2 = 4 benzosemiquinone + 2 H2O. Its function is as follows. Lignin degradation and detoxification of lignin-derived products. This is Laccase-1 (LAC1) from Melanocarpus albomyces.